A 452-amino-acid polypeptide reads, in one-letter code: tRNA modification GTPase MnmE (452 aa).

(6S)-5-formyl-5,6,7,8-tetrahydrofolate-binding residues include Arg-21, Glu-78, and Lys-118. The region spanning 214 to 375 (GMKVVIAGRP…LREHLKQAMG (162 aa)) is the TrmE-type G domain. Position 224 (Asn-224) interacts with K(+). GTP-binding positions include 224–229 (NAGKSS), 243–249 (TDIAGTT), and 268–271 (DTAG). Residue Ser-228 participates in Mg(2+) binding. Residues Thr-243, Ile-245, and Thr-248 each coordinate K(+). Thr-249 contributes to the Mg(2+) binding site. Residue Lys-452 participates in (6S)-5-formyl-5,6,7,8-tetrahydrofolate binding.

The protein belongs to the TRAFAC class TrmE-Era-EngA-EngB-Septin-like GTPase superfamily. TrmE GTPase family. Homodimer. Heterotetramer of two MnmE and two MnmG subunits. It depends on K(+) as a cofactor.

Its subcellular location is the cytoplasm. Its function is as follows. Exhibits a very high intrinsic GTPase hydrolysis rate. Involved in the addition of a carboxymethylaminomethyl (cmnm) group at the wobble position (U34) of certain tRNAs, forming tRNA-cmnm(5)s(2)U34. The chain is tRNA modification GTPase MnmE from Haemophilus influenzae (strain PittGG).